The chain runs to 430 residues: Ribosomal protein uS12 methylthiotransferase RimO (430 aa).

In terms of domain architecture, MTTase N-terminal spans 1-116 (MRVGIKVLGC…IANALEKGTD (116 aa)). [4Fe-4S] cluster is bound by residues C10, C46, C79, C148, C152, and C155. One can recognise a Radical SAM core domain in the interval 134–365 (LEERPYAYVK…LLQAEISNSR (232 aa)). In terms of domain architecture, TRAM spans 367-430 (DRFIGRKLKF…DEYDMWGSVT (64 aa)).

It belongs to the methylthiotransferase family. RimO subfamily. [4Fe-4S] cluster is required as a cofactor.

It is found in the cytoplasm. The catalysed reaction is L-aspartate(89)-[ribosomal protein uS12]-hydrogen + (sulfur carrier)-SH + AH2 + 2 S-adenosyl-L-methionine = 3-methylsulfanyl-L-aspartate(89)-[ribosomal protein uS12]-hydrogen + (sulfur carrier)-H + 5'-deoxyadenosine + L-methionine + A + S-adenosyl-L-homocysteine + 2 H(+). Its function is as follows. Catalyzes the methylthiolation of an aspartic acid residue of ribosomal protein uS12. In Thermotoga sp. (strain RQ2), this protein is Ribosomal protein uS12 methylthiotransferase RimO.